The primary structure comprises 296 residues: tRNA dimethylallyltransferase (296 aa).

ATP is bound at residue 19 to 26; sequence GPTASGKS. Residue 21–26 coordinates substrate; the sequence is TASGKS.

It belongs to the IPP transferase family. Monomer. Mg(2+) is required as a cofactor.

It carries out the reaction adenosine(37) in tRNA + dimethylallyl diphosphate = N(6)-dimethylallyladenosine(37) in tRNA + diphosphate. Functionally, catalyzes the transfer of a dimethylallyl group onto the adenine at position 37 in tRNAs that read codons beginning with uridine, leading to the formation of N6-(dimethylallyl)adenosine (i(6)A). The polypeptide is tRNA dimethylallyltransferase (Dinoroseobacter shibae (strain DSM 16493 / NCIMB 14021 / DFL 12)).